A 265-amino-acid chain; its full sequence is Putative 2-aminoethylphosphonate transport system permease protein PhnV (265 aa).

6 helical membrane passes run 13–33 (GVVASVLFIVFFFLPLAVILM), 69–89 (LTIGFCASLFALLCGVWAALA), 104–124 (VFYLPSAIPSVSVGLGILVAF), 131–151 (MNGTLWIVLTAHFVLISAFTF), 185–205 (LPLLMPWMVSALALSLSLSMG), and 233–253 (NIADGAALTIVLVAITLLLMM). In terms of domain architecture, ABC transmembrane type-1 spans 65–253 (LLASLTIGFC…LVAITLLLMM (189 aa)).

It belongs to the binding-protein-dependent transport system permease family.

It is found in the cell inner membrane. Probably part of the PhnSTUV complex (TC 3.A.1.11.5) involved in 2-aminoethylphosphonate import. Probably responsible for the translocation of the substrate across the membrane. In Salmonella paratyphi A (strain ATCC 9150 / SARB42), this protein is Putative 2-aminoethylphosphonate transport system permease protein PhnV (phnV).